The sequence spans 428 residues: Tyrosine--tRNA ligase (428 aa).

Position 41 (Tyr-41) interacts with L-tyrosine. A 'HIGH' region motif is present at residues 46–55 (PTADSLHLGH). L-tyrosine-binding residues include Tyr-179 and Gln-183. Residues 239-243 (KFGKT) carry the 'KMSKS' region motif. Residue Lys-242 coordinates ATP. The S4 RNA-binding domain maps to 361–418 (ADLMQALVDSELQPSRGQARKTIASNAITINGEKQSDPEYTFSDSDRLFGRYTLLRRG).

It belongs to the class-I aminoacyl-tRNA synthetase family. TyrS type 1 subfamily. Homodimer.

It is found in the cytoplasm. It catalyses the reaction tRNA(Tyr) + L-tyrosine + ATP = L-tyrosyl-tRNA(Tyr) + AMP + diphosphate + H(+). Catalyzes the attachment of tyrosine to tRNA(Tyr) in a two-step reaction: tyrosine is first activated by ATP to form Tyr-AMP and then transferred to the acceptor end of tRNA(Tyr). The protein is Tyrosine--tRNA ligase of Cronobacter sakazakii (strain ATCC BAA-894) (Enterobacter sakazakii).